The sequence spans 242 residues: N-glycosylase/DNA lyase (242 aa).

Positions 25, 52, and 63 each coordinate 8-oxoguanine. The segment at 119 to 183 is helix-hairpin-helix; it reads KSYYRDMNRL…VDARIERITR (65 aa). The active-site Schiff-base intermediate with DNA is the K143. 8-oxoguanine contacts are provided by F147 and P173. The active site involves D175. 8-oxoguanine-binding residues include D209 and W213.

It belongs to the archaeal N-glycosylase/DNA lyase (AGOG) family.

It catalyses the reaction 2'-deoxyribonucleotide-(2'-deoxyribose 5'-phosphate)-2'-deoxyribonucleotide-DNA = a 3'-end 2'-deoxyribonucleotide-(2,3-dehydro-2,3-deoxyribose 5'-phosphate)-DNA + a 5'-end 5'-phospho-2'-deoxyribonucleoside-DNA + H(+). In terms of biological role, DNA repair enzyme that is part of the base excision repair (BER) pathway; protects from oxidative damage by removing the major product of DNA oxidation, 8-oxoguanine (GO), from single- and double-stranded DNA substrates. The polypeptide is N-glycosylase/DNA lyase (Methanopyrus kandleri (strain AV19 / DSM 6324 / JCM 9639 / NBRC 100938)).